The chain runs to 809 residues: Sucrose synthase 3 (809 aa).

Positions 277 to 755 are GT-B glycosyltransferase; sequence MVFNVVILSP…GLQRIYERYT (479 aa).

The protein belongs to the glycosyltransferase 1 family. Plant sucrose synthase subfamily. Detected in the whole plant with highest expression in developing siliques, vasculature of cotyledons and stomatal guard cells. Also detected throughout the mature parts of the root but not in the expanding zone.

The catalysed reaction is an NDP-alpha-D-glucose + D-fructose = a ribonucleoside 5'-diphosphate + sucrose + H(+). Its function is as follows. Sucrose-cleaving enzyme that provides UDP-glucose and fructose for various metabolic pathways. Modulates metabolic homeostasis and direct carbon towards starch synthesis in developing seeds. The polypeptide is Sucrose synthase 3 (SUS3) (Arabidopsis thaliana (Mouse-ear cress)).